A 517-amino-acid chain; its full sequence is Forkhead box protein N4 (517 aa).

Residues 193-289 (KPIYSYSCLI…EEMHKWKRKD (97 aa)) constitute a DNA-binding region (fork-head). 2 disordered regions span residues 365–398 (VQPQ…LPHP) and 497–517 (SGTS…IALL).

It is found in the nucleus. In terms of biological role, transcription factor essential for neural and some non-neural tissues development, such as retina and lung respectively. Binds to an 11-bp consensus sequence containing the invariant tetranucleotide 5'-ACGC-3'. During development of the central nervous system, is required to specify the amacrine and horizontal cell fates from multipotent retinal progenitors while suppressing the alternative photoreceptor cell fates through activating DLL4-NOTCH signaling. Also acts synergistically with ASCL1/MASH1 to activate DLL4-NOTCH signaling and drive commitment of p2 progenitors to the V2b interneuron fates during spinal cord neurogenesis. In development of non-neural tissues, plays an essential role in the specification of the atrioventricular canal and is indirectly required for patterning the distal airway during lung development. The protein is Forkhead box protein N4 (FOXN4) of Homo sapiens (Human).